Here is a 447-residue protein sequence, read N- to C-terminus: MNKNTWIIGFTLFAMFFGAGNLIFPTQLGLESGHFFWPAILAFALTGIGLPLLGVVVGALDKHGYIGSFNKISPRFSLIFLIIIYLTIGPLFAIPRTASTSFEMSVTPIAQNSGNLALFIFTVIYFLIVLYLCLNPNKMIDRIGSLLTPLLLITIVAMIIKGFVDFSGHSSNYGMTNAYHSNLSGFSQGFTQGYLTMDAIASIAFSMIVVNAIKTTGIQHADKIFKQTIIAGLIAAIALVFIYISLGYIGNHINIPSDTLKELKAKDQNIGTYLLTTMATKGFGTFGKYLLGIIVSLACLTTACGLIVSVSEYFHRILPKIPYKVFVIFFILVSFILANQGLNSVIKMSVPVLSVIYPVAITVILLILIARFIPTKRIAQQIPLIIVAIESILSLITTQGWIRISFIDDLPLKEYSLEWFPIAVVATLVGYMISYFVKQSNIVYQKE.

Helical transmembrane passes span 5-25 (TWIIGFTLFAMFFGAGNLIFP), 40-60 (ILAFALTGIGLPLLGVVVGAL), 74-94 (PRFSLIFLIIIYLTIGPLFAI), 114-134 (GNLALFIFTVIYFLIVLYLCL), 143-163 (IGSLLTPLLLITIVAMIIKGF), 193-213 (GYLTMDAIASIAFSMIVVNAI), 229-249 (IIAGLIAAIALVFIYISLGYI), 290-310 (LLGIIVSLACLTTACGLIVSV), 317-337 (ILPKIPYKVFVIFFILVSFIL), 350-370 (VPVLSVIYPVAITVILLILIA), 382-402 (IPLIIVAIESILSLITTQGWI), and 417-437 (LEWFPIAVVATLVGYMISYFV).

This sequence belongs to the branched chain amino acid transporter family.

The protein resides in the cell membrane. Its function is as follows. Component of the transport system for branched-chain amino acids (leucine, isoleucine and valine), which is coupled to a proton motive force. This chain is Putative branched-chain amino acid carrier protein SE_1090, found in Staphylococcus epidermidis (strain ATCC 12228 / FDA PCI 1200).